Here is a 234-residue protein sequence, read N- to C-terminus: Thrombin-like enzyme ancrod (234 aa).

A Peptidase S1 domain is found at 1–227; the sequence is VIGGDECNIN…YRDWVNNVIA (227 aa). Intrachain disulfides connect Cys-7/Cys-141, Cys-28/Cys-44, Cys-78/Cys-232, Cys-120/Cys-188, Cys-152/Cys-167, and Cys-178/Cys-203. Asn-23 carries N-linked (GlcNAc...) asparagine glycosylation. His-43 serves as the catalytic Charge relay system. N-linked (GlcNAc...) asparagine glycosylation occurs at Asn-79. Catalysis depends on Asp-88, which acts as the Charge relay system. 2 N-linked (GlcNAc...) asparagine glycosylation sites follow: Asn-99 and Asn-148. Ser-182 functions as the Charge relay system in the catalytic mechanism. An N-linked (GlcNAc...) asparagine glycan is attached at Asn-229.

It belongs to the peptidase S1 family. Snake venom subfamily. As to quaternary structure, monomer. As to expression, expressed by the venom gland.

The protein resides in the secreted. It carries out the reaction Selective cleavage of Arg-|-Xaa bond in fibrinogen, to form fibrin, and release fibrinopeptide A. The specificity of further degradation of fibrinogen varies with species origin of the enzyme.. Its function is as follows. Thrombin-like snake venom serine protease that acts as an anticoagulant. It cleaves fibrinogen (FGA) to split off the A-fibrinopeptides (A, AY and AP), but not the B-fibrinopeptide. The resulting fibrin polymers are imperfectly formed and much smaller in size (1 to 2 um long) than the fibrin polymers produced by the action of thrombin. These ancrod-induced microthrombi are friable, unstable, urea-soluble and have significantly degraded alpha chains. They do not cross-link to form thrombi. They are markedly susceptible to digestion by plasmin and are rapidly removed from circulation by either reticuloendothelial phagocytosis or normal fibrinolysis, or both. Anticoagulation through the removal of fibrinogen from the blood is rapid, occurring within hours following its administration. It does not activate plasminogen and does not degrade preformed, fully cross-linked thrombin fibrin. It also reduces the level of plasminogen activator inhibitor (PAI) and may stimulate the release of tissue plasminogen activator (PLAT) from the endothelium. The profibrinolytic effect of these 2 actions appears to be limited to local microthrombus degradation. In Calloselasma rhodostoma (Malayan pit viper), this protein is Thrombin-like enzyme ancrod.